We begin with the raw amino-acid sequence, 185 residues long: MVSSWRVQQAAREVKAGAVIAYPTEAVWGLGCDPWNEDAVYRLLALKSRPVDKGLILIADNIRQFDFLFEDFPQDWIDRMSATWPGPNTWLVPHQDLLPEWVTGQHDTVALRVSDHPQVRELCALVGPLISTSCNPAGRPAAKSRLRVEQYFHNELDMVLGGALGGRKNPSLIRDLATGEVVRPG.

A YrdC-like domain is found at 4–185 (SWRVQQAARE…LATGEVVRPG (182 aa)).

It belongs to the SUA5 family. TsaC subfamily.

It is found in the cytoplasm. It carries out the reaction L-threonine + hydrogencarbonate + ATP = L-threonylcarbamoyladenylate + diphosphate + H2O. Functionally, required for the formation of a threonylcarbamoyl group on adenosine at position 37 (t(6)A37) in tRNAs that read codons beginning with adenine. Catalyzes the conversion of L-threonine, HCO(3)(-)/CO(2) and ATP to give threonylcarbamoyl-AMP (TC-AMP) as the acyladenylate intermediate, with the release of diphosphate. This chain is Threonylcarbamoyl-AMP synthase, found in Pseudomonas entomophila (strain L48).